The following is a 347-amino-acid chain: Fe(2+) transport protein 1 (347 aa).

Residues methionine 1 to alanine 22 form the signal peptide. Over isoleucine 23–lysine 52 the chain is Extracellular. Residues valine 53–serine 73 form a helical membrane-spanning segment. At arginine 74–asparagine 84 the chain is on the cytoplasmic side. A helical membrane pass occupies residues isoleucine 85–valine 105. The Extracellular portion of the chain corresponds to leucine 106–lysine 125. Residues phenylalanine 126–methionine 146 traverse the membrane as a helical segment. Residues alanine 147 to arginine 192 lie on the Cytoplasmic side of the membrane. Residues lysine 154 and lysine 179 each participate in a glycyl lysine isopeptide (Lys-Gly) (interchain with G-Cter in ubiquitin) cross-link. The helical transmembrane segment at valine 193–leucine 213 threads the bilayer. At glycine 214–glycine 224 the chain is on the extracellular side. Residues leucine 225–leucine 245 form a helical membrane-spanning segment. Topologically, residues glutamine 246–lysine 254 are cytoplasmic. A helical membrane pass occupies residues phenylalanine 255–leucine 275. The Extracellular portion of the chain corresponds to serine 276–alanine 286. The helical transmembrane segment at leucine 287–valine 307 threads the bilayer. The Cytoplasmic portion of the chain corresponds to aspartate 308 to glutamine 326. The helical transmembrane segment at phenylalanine 327–alanine 347 threads the bilayer.

The protein belongs to the ZIP transporter (TC 2.A.5) family. As to quaternary structure, interacts with FREE1. Post-translationally, monoubiquitinated on several Lys residues. Monoubiquitination controls trafficking from the plasma membrane and targeting to the vacuole. In terms of tissue distribution, expressed in the external cell layers of the root including the lateral branching zone. Also detected in flowers before pollination.

The protein resides in the cell membrane. Its subcellular location is the early endosome. The protein localises to the golgi apparatus. It localises to the trans-Golgi network. It is found in the vacuole. Functionally, high-affinity iron transporter that plays a key role in the uptake of iron from the rhizosphere across the plasma membrane in the root epidermal layer. Acts as the principal regulator of iron homeostasis in planta. Also mediates the heavy metals uptake under iron-deficiency by its ability to transport cobalt, cadmium, manganese and/or zinc ions. The sequence is that of Fe(2+) transport protein 1 (IRT1) from Arabidopsis thaliana (Mouse-ear cress).